Reading from the N-terminus, the 95-residue chain is Acyl carrier protein (95 aa).

One can recognise a Carrier domain in the interval 4–79; sequence KEIFERIEQV…HVMELTLDLV (76 aa). The residue at position 39 (serine 39) is an O-(pantetheine 4'-phosphoryl)serine.

It belongs to the acyl carrier protein (ACP) family. In terms of processing, 4'-phosphopantetheine is transferred from CoA to a specific serine of apo-ACP by AcpS. This modification is essential for activity because fatty acids are bound in thioester linkage to the sulfhydryl of the prosthetic group.

The protein resides in the cytoplasm. It functions in the pathway lipid metabolism; fatty acid biosynthesis. Its function is as follows. Carrier of the growing fatty acid chain in fatty acid biosynthesis. In Saccharopolyspora erythraea (strain ATCC 11635 / DSM 40517 / JCM 4748 / NBRC 13426 / NCIMB 8594 / NRRL 2338), this protein is Acyl carrier protein.